We begin with the raw amino-acid sequence, 430 residues long: RNA pseudouridine synthase 2, chloroplastic (430 aa).

A chloroplast-targeting transit peptide spans 1–43 (MLSISQLPSFSLTTAKSLRYPSSPSSSLSIFFSFFPKVSNFVR). The S4 RNA-binding domain maps to 82–155 (IRLDSWISSR…IPLDIVYEDK (74 aa)). Residues 195-222 (SNSEEDDDSDEETFSDDEEMTTSPSSYA) are disordered. Residues 196–214 (NSEEDDDSDEETFSDDEEM) are compositionally biased toward acidic residues. Residue D234 is part of the active site.

It belongs to the pseudouridine synthase RluA family.

The protein localises to the plastid. It localises to the chloroplast. It catalyses the reaction a uridine in RNA = a pseudouridine in RNA. This chain is RNA pseudouridine synthase 2, chloroplastic, found in Arabidopsis thaliana (Mouse-ear cress).